Here is a 285-residue protein sequence, read N- to C-terminus: Polyamine aminopropyltransferase (285 aa).

The PABS domain maps to 5 to 241 (QDWFTESYPD…GWWSATMAGK (237 aa)). S-methyl-5'-thioadenosine is bound at residue glutamine 35. Residues histidine 66 and aspartate 90 each coordinate spermidine. Residues aspartate 110 and 141-142 (DG) contribute to the S-methyl-5'-thioadenosine site. Aspartate 160 acts as the Proton acceptor in catalysis. 160-163 (DSTD) is a binding site for spermidine. Proline 167 provides a ligand contact to S-methyl-5'-thioadenosine.

The protein belongs to the spermidine/spermine synthase family. In terms of assembly, homodimer or homotetramer.

It is found in the cytoplasm. The catalysed reaction is S-adenosyl 3-(methylsulfanyl)propylamine + putrescine = S-methyl-5'-thioadenosine + spermidine + H(+). It participates in amine and polyamine biosynthesis; spermidine biosynthesis; spermidine from putrescine: step 1/1. Catalyzes the irreversible transfer of a propylamine group from the amino donor S-adenosylmethioninamine (decarboxy-AdoMet) to putrescine (1,4-diaminobutane) to yield spermidine. The polypeptide is Polyamine aminopropyltransferase (Methylococcus capsulatus (strain ATCC 33009 / NCIMB 11132 / Bath)).